Reading from the N-terminus, the 150-residue chain is Calmodulin (150 aa).

EF-hand domains lie at 9 to 44, 45 to 80, 82 to 117, and 118 to 150; these read EQIA…LGQS, PTAA…KMKD, DNEE…LGER, and LSQE…ISSK. Ca(2+) is bound by residues Asp22, Asp24, Asp26, Asn28, Glu33, Asp58, Asp60, Asn62, Thr64, Glu69, Asp95, Asp97, Asn99, Tyr101, Glu106, Asp131, Asp133, Asp135, and Glu142.

The protein belongs to the calmodulin family. As to quaternary structure, interacts with rng2.

It is found in the cytoplasm. The protein localises to the cytoskeleton. Its subcellular location is the microtubule organizing center. The protein resides in the spindle pole body. Functionally, calmodulin mediates the control of a large number of enzymes, ion channels and other proteins by Ca(2+). Among the enzymes to be stimulated by the calmodulin-Ca(2+) complex are a number of protein kinases and phosphatases. This chain is Calmodulin (cam1), found in Schizosaccharomyces pombe (strain 972 / ATCC 24843) (Fission yeast).